Reading from the N-terminus, the 253-residue chain is Chromosome-partitioning ATPase Soj (253 aa).

Residues Lys-11, Gly-12, Gly-13, Val-14, Gly-15, Lys-16, Thr-17, Thr-18, Pro-211, and Asn-213 each contribute to the ATP site. Thr-17 lines the Mg(2+) pocket.

It belongs to the ParA family.

The catalysed reaction is ATP + H2O = ADP + phosphate + H(+). ATPase probably involved in chromosome partitioning. Cooperatively binds dsDNA, forming nucleoprotein filaments in a strictly ATP-dependent fashion. The protein is Chromosome-partitioning ATPase Soj of Treponema pallidum (strain Nichols).